We begin with the raw amino-acid sequence, 1371 residues long: Probable serine/threonine-protein kinase DDB_G0293292 (1371 aa).

2 consecutive Protein kinase domains span residues 9–269 and 1131–1371; these read NKIL…HPNT and FKEV…QPTL. ATP contacts are provided by residues 15-23 and lysine 39; that span reads IDDGNTKRK. The active-site Proton acceptor is the aspartate 143.

This sequence belongs to the protein kinase superfamily. Ser/Thr protein kinase family.

It catalyses the reaction L-seryl-[protein] + ATP = O-phospho-L-seryl-[protein] + ADP + H(+). The enzyme catalyses L-threonyl-[protein] + ATP = O-phospho-L-threonyl-[protein] + ADP + H(+). This is Probable serine/threonine-protein kinase DDB_G0293292 from Dictyostelium discoideum (Social amoeba).